Reading from the N-terminus, the 320-residue chain is Lactamase-like protein GME11357 (320 aa).

Residues His-106, His-108, Asp-110, and His-111 each contribute to the Zn(2+) site. The active-site Proton donor/acceptor is the Asp-110.

Belongs to the metallo-beta-lactamase superfamily. Zn(2+) is required as a cofactor.

It functions in the pathway secondary metabolite biosynthesis. Its function is as follows. Lactamase-like protein; part of the gene cluster that mediates the biosynthesis of dibenzodioxocinones such as pestalotiollide B, a novel class of inhibitors against cholesterol ester transfer protein (CEPT). The biosynthesis initiates from condensation of acetate and malonate units catalyzed by the non-reducing PKS pks8/GME11356. Pks8/GME11356 lacks a thioesterase (TE) domain, which is important to the cyclizing of the third ring of atrochrysone carboxylic acid, and the esterase GME11355 might play the role of TE and catalyzes the cyclization reaction of the C ring. The lactamase-like protein GME11357 (or other beta-lactamases in Pestalotiopsis microspora) probably hydrolyzes the thioester bond between the ACP of pks8/GME11356 and the intermediate to release atrochrysone carboxylic acid, which is spontaneously dehydrates to form endocrocin anthrone. Endocrocin anthrone is further converted to emodin via the endocrocin intermediate. Emodin is then oxidized by several enzymes such as the Baeyer-Villiger oxidase GME11358, the oxidoreductase GME11367, the short chain dehydrogenase/reductase GME11373, as well as by other oxidoreductases from the cluster, to modify the A and C rings and open the B ring, and finally yield monodictyphenone. The prenyltransferase GME11375 may catalyze the addition reaction between the C5 side chains and the carbon bone of dibenzodioxocinones. The remaining biochemical reactions to the final product dibenzodioxocinones should be methylation catalyzed by methyltransferase GME11366 and reduction and lactonization reaction catalyzed by a series of oxidordeuctases. The polypeptide is Lactamase-like protein GME11357 (Pestalotiopsis microspora).